A 594-amino-acid chain; its full sequence is (-)-endo-fenchol synthase, chloroplastic (594 aa).

Residues 1-50 constitute a chloroplast transit peptide; the sequence is MSSLVMHVGIVNKPAITYLPTLSRSASNLHNVSSTRLQTSCSLQLDYKPV. Mg(2+) contacts are provided by Asp-348, Asp-352, Asp-492, and Glu-500. A DDXXD motif motif is present at residues 348–352; sequence DDIYD.

The protein belongs to the terpene synthase family. Tpsa subfamily. Mg(2+) is required as a cofactor. The cofactor is Mn(2+). As to expression, expressed at high levels in leaves.

It is found in the plastid. Its subcellular location is the chloroplast. The catalysed reaction is (2E)-geranyl diphosphate = alpha-pinene + diphosphate. It catalyses the reaction (2E)-geranyl diphosphate + H2O = (1S,2S,4R)-endo-fenchol + diphosphate. The enzyme catalyses (2E)-geranyl diphosphate = limonene + diphosphate. It participates in secondary metabolite biosynthesis; terpenoid biosynthesis. In terms of biological role, monoterpene synthase involved in the biosynthesis of volatile compounds widely used in aromatherapy and folk medicine, and present in culinary herbs. Mediates the conversion of (2E)-geranyl diphosphate (GPP) into alpha fenchol, limonene and alpha-pinene and, as minor compounds, into beta-myrcene, alpha-terpinolene and alpha-phellandrene. In Lavandula pedunculata subsp. lusitanica (French lavender), this protein is (-)-endo-fenchol synthase, chloroplastic.